A 121-amino-acid polypeptide reads, in one-letter code: Putative membrane protein insertion efficiency factor (121 aa).

Belongs to the UPF0161 family.

Its subcellular location is the cell inner membrane. Its function is as follows. Could be involved in insertion of integral membrane proteins into the membrane. This is Putative membrane protein insertion efficiency factor from Rhodopseudomonas palustris (strain HaA2).